The sequence spans 127 residues: Ribosome-binding factor A (127 aa).

The protein belongs to the RbfA family. As to quaternary structure, monomer. Binds 30S ribosomal subunits, but not 50S ribosomal subunits or 70S ribosomes.

Its subcellular location is the cytoplasm. Functionally, one of several proteins that assist in the late maturation steps of the functional core of the 30S ribosomal subunit. Associates with free 30S ribosomal subunits (but not with 30S subunits that are part of 70S ribosomes or polysomes). Required for efficient processing of 16S rRNA. May interact with the 5'-terminal helix region of 16S rRNA. The chain is Ribosome-binding factor A from Glaesserella parasuis serovar 5 (strain SH0165) (Haemophilus parasuis).